Consider the following 219-residue polypeptide: Redox-sensing transcriptional repressor Rex (219 aa).

Positions 17 to 56 (LYYRIFKRFHRENIVKTSSKQIAEAIGIDPATVRRDFSYF) form a DNA-binding region, H-T-H motif. Residue 91-96 (GVGNIG) coordinates NAD(+).

Belongs to the transcriptional regulatory Rex family. As to quaternary structure, homodimer.

The protein resides in the cytoplasm. Functionally, modulates transcription in response to changes in cellular NADH/NAD(+) redox state. The protein is Redox-sensing transcriptional repressor Rex of Streptococcus thermophilus (strain ATCC BAA-491 / LMD-9).